A 344-amino-acid polypeptide reads, in one-letter code: ATPase GET3 (344 aa).

26–33 is an ATP binding site; it reads KGGVGKTT. Asp57 is a catalytic residue. ATP-binding residues include Glu239 and Asn266. Zn(2+)-binding residues include Cys276 and Cys279.

It belongs to the arsA ATPase family. As to quaternary structure, homodimer. Component of the Golgi to ER traffic (GET) complex, which is composed of GET1, GET2 and GET3. Within the complex, GET1 and GET2 form a heterotetramer which is stabilized by phosphatidylinositol binding and which binds to the GET3 homodimer. Interacts with the chloride channel protein GEF1.

The protein localises to the cytoplasm. The protein resides in the endoplasmic reticulum. Its subcellular location is the golgi apparatus. Its function is as follows. ATPase required for the post-translational delivery of tail-anchored (TA) proteins to the endoplasmic reticulum. Recognizes and selectively binds the transmembrane domain of TA proteins in the cytosol. This complex then targets to the endoplasmic reticulum by membrane-bound receptors GET1 and GET2, where the tail-anchored protein is released for insertion. This process is regulated by ATP binding and hydrolysis. ATP binding drives the homodimer towards the closed dimer state, facilitating recognition of newly synthesized TA membrane proteins. ATP hydrolysis is required for insertion. Subsequently, the homodimer reverts towards the open dimer state, lowering its affinity for the GET1-GET2 receptor, and returning it to the cytosol to initiate a new round of targeting. Cooperates with the HDEL receptor ERD2 to mediate the ATP-dependent retrieval of resident ER proteins that contain a C-terminal H-D-E-L retention signal from the Golgi to the ER. Involved in low-level resistance to the oxyanions arsenite and arsenate, and in heat tolerance. This Komagataella phaffii (strain GS115 / ATCC 20864) (Yeast) protein is ATPase GET3.